Here is a 214-residue protein sequence, read N- to C-terminus: uncharacterized protein (214 aa).

Residues lysine 2 to glycine 118 form the Response regulatory domain. The residue at position 53 (aspartate 53) is a 4-aspartylphosphate. The 66-residue stretch at glutamate 142–asparagine 207 folds into the HTH luxR-type domain. The segment at residues asparagine 166 to serine 185 is a DNA-binding region (H-T-H motif).

Phosphorylated by YhcY.

The protein localises to the cytoplasm. Member of the two-component regulatory system YhcY/YhcZ. This is an uncharacterized protein from Bacillus subtilis (strain 168).